An 870-amino-acid polypeptide reads, in one-letter code: DNA mismatch repair protein MutS (870 aa).

616-623 is a binding site for ATP; sequence GPNMAGKS.

It belongs to the DNA mismatch repair MutS family.

Functionally, this protein is involved in the repair of mismatches in DNA. It is possible that it carries out the mismatch recognition step. This protein has a weak ATPase activity. The protein is DNA mismatch repair protein MutS of Parabacteroides distasonis (strain ATCC 8503 / DSM 20701 / CIP 104284 / JCM 5825 / NCTC 11152).